The following is a 267-amino-acid chain: Matrilysin (267 aa).

The first 17 residues, 1–17, serve as a signal peptide directing secretion; the sequence is MRLTVLCAVCLLPGSLA. Residues 18–94 constitute a propeptide, activation peptide; sequence LPLPQEAGGM…PRCGVPDVAE (77 aa). The short motif at 85-92 is the Cysteine switch element; the sequence is PRCGVPDV. Cys-87 is a binding site for Zn(2+). Asp-153 is a Ca(2+) binding site. His-163 and Asp-165 together coordinate Zn(2+). The Ca(2+) site is built by Asp-170, Gly-171, Gly-173, and Thr-175. Position 178 (His-178) interacts with Zn(2+). Ca(2+)-binding residues include Gly-185, Gly-187, and Asp-189. Residue His-191 coordinates Zn(2+). Ca(2+)-binding residues include Asp-193 and Glu-196. His-214 provides a ligand contact to Zn(2+). Residue Glu-215 is part of the active site. The Zn(2+) site is built by His-218 and His-224.

This sequence belongs to the peptidase M10A family. Requires Ca(2+) as cofactor. The cofactor is Zn(2+).

The protein localises to the secreted. The protein resides in the extracellular space. It localises to the extracellular matrix. The enzyme catalyses Cleavage of 14-Ala-|-Leu-15 and 16-Tyr-|-Leu-17 in B chain of insulin. No action on collagen types I, II, IV, V. Cleaves gelatin chain alpha2(I) &gt; alpha1(I).. Its function is as follows. Degrades casein, gelatins of types I, III, IV, and V, and fibronectin. Activates procollagenase. The polypeptide is Matrilysin (MMP7) (Homo sapiens (Human)).